The primary structure comprises 411 residues: Adenylosuccinate synthetase (411 aa).

Residues 11 to 17 and 39 to 41 contribute to the GTP site; these read GDEGKGK and GHT. Asp12 acts as the Proton acceptor in catalysis. Mg(2+) contacts are provided by Asp12 and Gly39. IMP is bound by residues 12–15, 37–40, Thr121, Arg135, Gln215, Thr230, and Arg294; these read DEGK and NAGH. The active-site Proton donor is the His40. 290–296 serves as a coordination point for substrate; it reads TTTKRPR. Residues Arg296, 322 to 324, and 400 to 402 each bind GTP; these read KLD and STS.

Belongs to the adenylosuccinate synthetase family. In terms of assembly, homodimer. The cofactor is Mg(2+).

Its subcellular location is the cytoplasm. It carries out the reaction IMP + L-aspartate + GTP = N(6)-(1,2-dicarboxyethyl)-AMP + GDP + phosphate + 2 H(+). It participates in purine metabolism; AMP biosynthesis via de novo pathway; AMP from IMP: step 1/2. Plays an important role in the de novo pathway of purine nucleotide biosynthesis. Catalyzes the first committed step in the biosynthesis of AMP from IMP. The chain is Adenylosuccinate synthetase from Helicobacter pylori (strain G27).